A 159-amino-acid chain; its full sequence is 6,7-dimethyl-8-ribityllumazine synthase (159 aa).

Residues Phe-22, Ala-57–Glu-59, and Ala-81–Ile-83 contribute to the 5-amino-6-(D-ribitylamino)uracil site. Residue Gly-86–Thr-87 coordinates (2S)-2-hydroxy-3-oxobutyl phosphate. The Proton donor role is filled by His-89. Phe-114 contacts 5-amino-6-(D-ribitylamino)uracil. Arg-128 lines the (2S)-2-hydroxy-3-oxobutyl phosphate pocket.

Belongs to the DMRL synthase family. Forms an icosahedral capsid composed of 60 subunits, arranged as a dodecamer of pentamers.

It catalyses the reaction (2S)-2-hydroxy-3-oxobutyl phosphate + 5-amino-6-(D-ribitylamino)uracil = 6,7-dimethyl-8-(1-D-ribityl)lumazine + phosphate + 2 H2O + H(+). Its pathway is cofactor biosynthesis; riboflavin biosynthesis; riboflavin from 2-hydroxy-3-oxobutyl phosphate and 5-amino-6-(D-ribitylamino)uracil: step 1/2. In terms of biological role, catalyzes the formation of 6,7-dimethyl-8-ribityllumazine by condensation of 5-amino-6-(D-ribitylamino)uracil with 3,4-dihydroxy-2-butanone 4-phosphate. This is the penultimate step in the biosynthesis of riboflavin. In Shewanella baltica (strain OS155 / ATCC BAA-1091), this protein is 6,7-dimethyl-8-ribityllumazine synthase.